We begin with the raw amino-acid sequence, 122 residues long: Large ribosomal subunit protein uL14 (122 aa).

It belongs to the universal ribosomal protein uL14 family. As to quaternary structure, part of the 50S ribosomal subunit. Forms a cluster with proteins L3 and L19. In the 70S ribosome, L14 and L19 interact and together make contacts with the 16S rRNA in bridges B5 and B8.

Its function is as follows. Binds to 23S rRNA. Forms part of two intersubunit bridges in the 70S ribosome. This Brucella anthropi (strain ATCC 49188 / DSM 6882 / CCUG 24695 / JCM 21032 / LMG 3331 / NBRC 15819 / NCTC 12168 / Alc 37) (Ochrobactrum anthropi) protein is Large ribosomal subunit protein uL14.